A 463-amino-acid chain; its full sequence is MAQVSINSDYSEWASSTDAGERARLLQSPCVDVVPKSEGEASPGDPDSGTTSTLGAVFIVVNACLGAGLLNFPAAFSTAGGVAAGIALQMGMLVFIISGLVILAYCSQASNERTYQEVVWAVCGKLTGVLCEVAIAVYTFGTCIAFLIIIGDQQDKIIAVMSKEPDGASGSPWYTDRKFTISLTAFLFILPLSIPKEIGFQKYASFLSVVGTWYVTAIIIIKYIWPDKEMRPGDILTRPASWMAVFNAMPTICFGFQCHVSSVPVFNSMRQPEVKTWGGVVTAAMVIALAVYMGTGICGFLTFGAAVDPDVLRSYPSEDVAVAVARAFIILSVLTSYPILHFCGRAVVEGLWLRYKGMPVEEDVGRERRRRVLQTLVWFLLTLLLALFIPDIGKVISVIGGLAACFIFIFPGLCLIQAKLSEMEEVKPASWWALVSYGVLLVTLGAFIFGQTTANAIFVDLLA.

Phosphoserine is present on S28. 11 helical membrane passes run 56–76, 82–102, 130–150, 179–199, 206–226, 240–260, 283–303, 320–340, 372–392, 396–416, and 429–449; these read AVFIVVNACLGAGLLNFPAAF, VAAGIALQMGMLVFIISGLVI, LCEVAIAVYTFGTCIAFLIII, FTISLTAFLFILPLSIPKEIG, FLSVVGTWYVTAIIIIKYIWP, ASWMAVFNAMPTICFGFQCHV, AAMVIALAVYMGTGICGFLTF, VAVAVARAFIILSVLTSYPIL, VLQTLVWFLLTLLLALFIPDI, ISVIGGLAACFIFIFPGLCLI, and ASWWALVSYGVLLVTLGAFIF.

It belongs to the amino acid/polyamine transporter 2 family. Interacts with the mTORC1 complex; this interaction mediates the recruitment of mTORC1 to the lysosome and its subsequent activation. In terms of tissue distribution, highly expressed in the brain, including the hippocampus, especially in the granular layer of dentate gyrus cells and the pyramidal cell layer of the hippocampus, amygdala, thalamus, hypothalamus, in the layer of Purkinje cells in the cerebellum and the layers of cortex. Particularly strong expression in neurons of the ventromedial hypothalamus, basolateral amygdala, ventral tegmental area, and locus coeruleus. Not detected in glial cells, including astrocytes. In addition to brain, also expressed in the spinal cord (at protein level).

It is found in the lysosome membrane. Its subcellular location is the cell projection. The protein localises to the axon. The enzyme catalyses L-glutamine(in) + Na(+)(in) = L-glutamine(out) + Na(+)(out). The catalysed reaction is L-asparagine(in) + Na(+)(in) = L-asparagine(out) + Na(+)(out). Functionally, symporter that selectively cotransports sodium ions and amino acids, such as L-glutamine and L-asparagine from the lysosome into the cytoplasm and may participates in mTORC1 activation. The transport activity requires an acidic lysosomal lumen. The polypeptide is Sodium-coupled neutral amino acid transporter 7 (Mus musculus (Mouse)).